The primary structure comprises 136 residues: MTSLSRPRVEFISTILQTVLNLGLLCLGLILVVFLGKETVHLADVLFAPEQTSKYELVEGLVVYFLYFEFIALIVKYFQSGFHFPLRYFVYIGITAIVRLIIVDHKSPLDVLIYSAAILLLVITLWLCNSKRLKRE.

Transmembrane regions (helical) follow at residues 15-35, 55-75, 82-102, and 108-128; these read ILQT…VVFL, YELV…ALIV, FHFP…RLII, and PLDV…LWLC.

Belongs to the PsiE family.

It is found in the cell inner membrane. This Escherichia coli (strain SE11) protein is Protein PsiE.